A 420-amino-acid chain; its full sequence is Serine hydroxymethyltransferase (420 aa).

(6S)-5,6,7,8-tetrahydrofolate is bound by residues leucine 121 and 125 to 127 (GHL). Lysine 230 bears the N6-(pyridoxal phosphate)lysine mark.

Belongs to the SHMT family. In terms of assembly, homodimer. The cofactor is pyridoxal 5'-phosphate.

The protein localises to the cytoplasm. It carries out the reaction (6R)-5,10-methylene-5,6,7,8-tetrahydrofolate + glycine + H2O = (6S)-5,6,7,8-tetrahydrofolate + L-serine. It functions in the pathway one-carbon metabolism; tetrahydrofolate interconversion. It participates in amino-acid biosynthesis; glycine biosynthesis; glycine from L-serine: step 1/1. Functionally, catalyzes the reversible interconversion of serine and glycine with tetrahydrofolate (THF) serving as the one-carbon carrier. This reaction serves as the major source of one-carbon groups required for the biosynthesis of purines, thymidylate, methionine, and other important biomolecules. Also exhibits THF-independent aldolase activity toward beta-hydroxyamino acids, producing glycine and aldehydes, via a retro-aldol mechanism. The polypeptide is Serine hydroxymethyltransferase (Streptomyces avermitilis (strain ATCC 31267 / DSM 46492 / JCM 5070 / NBRC 14893 / NCIMB 12804 / NRRL 8165 / MA-4680)).